A 529-amino-acid chain; its full sequence is Glycylpeptide N-tetradecanoyltransferase (529 aa).

A compositionally biased stretch (polar residues) spans Met-1 to Glu-10. Positions Met-1–Ser-65 are disordered. A compositionally biased stretch (basic and acidic residues) spans His-11–Leu-23. Polar residues predominate over residues Glu-26–Thr-40. Tetradecanoyl-CoA contacts are provided by residues Phe-118 to Trp-121, Leu-252 to Val-254, and Ser-260 to Thr-264. The active-site Proton acceptor; via carboxylate is the Val-529.

The protein belongs to the NMT family. In terms of assembly, monomer.

The protein localises to the cytoplasm. It carries out the reaction N-terminal glycyl-[protein] + tetradecanoyl-CoA = N-tetradecanoylglycyl-[protein] + CoA + H(+). Adds a myristoyl group to the N-terminal glycine residue of certain cellular proteins. The protein is Glycylpeptide N-tetradecanoyltransferase of Ajellomyces capsulatus (Darling's disease fungus).